The primary structure comprises 677 residues: Galactocerebrosidase (677 aa).

A signal peptide spans 1-33 (MGTVPAGSRRAPGCGEGMFILCLALLLAPGAPA). Positions 101, 143, and 189 each coordinate substrate. Glu190 (proton donor/acceptor) is an active-site residue. Glu265 serves as the catalytic Nucleophile. Cys278 and Cys385 form a disulfide bridge. Residues Asn291, Asn370, and Asn381 are each glycosylated (N-linked (GlcNAc...) asparagine). Arg387 is a substrate binding site. N-linked (GlcNAc...) asparagine glycosylation is found at Asn394, Asn399, Asn424, Asn441, Asn509, Asn549, and Asn630.

This sequence belongs to the glycosyl hydrolase 59 family.

The protein localises to the lysosome. The catalysed reaction is a beta-D-galactosyl-(1&lt;-&gt;1')-N-acylsphing-4-enine + H2O = an N-acylsphing-4-enine + D-galactose. It carries out the reaction beta-D-galactosyl-(1&lt;-&gt;1)-sphing-4-enine + H2O = sphing-4-enine + D-galactose. The enzyme catalyses a D-galactosylceramide + H2O = an N-acyl-sphingoid base + D-galactose. Its function is as follows. Hydrolyzes the galactose ester bonds of glycolipids such as galactosylceramide and galactosylsphingosine. This Xenopus laevis (African clawed frog) protein is Galactocerebrosidase.